The chain runs to 185 residues: Adenine phosphoribosyltransferase (185 aa).

This sequence belongs to the purine/pyrimidine phosphoribosyltransferase family. As to quaternary structure, homodimer.

It localises to the cytoplasm. The enzyme catalyses AMP + diphosphate = 5-phospho-alpha-D-ribose 1-diphosphate + adenine. Its pathway is purine metabolism; AMP biosynthesis via salvage pathway; AMP from adenine: step 1/1. Its function is as follows. Catalyzes a salvage reaction resulting in the formation of AMP, that is energically less costly than de novo synthesis. This Arthrobacter sp. (strain FB24) protein is Adenine phosphoribosyltransferase.